A 24-amino-acid polypeptide reads, in one-letter code: Humanin-like 11 (24 aa).

This sequence belongs to the humanin family.

Its subcellular location is the secreted. The protein localises to the cytoplasm. Functionally, plays a role as a neuroprotective and antiapoptotic factor. The chain is Humanin-like 11 from Homo sapiens (Human).